The following is a 564-amino-acid chain: Dihydroxy-acid dehydratase (564 aa).

Cys-53 provides a ligand contact to [2Fe-2S] cluster. Mg(2+) is bound at residue Asp-85. A [2Fe-2S] cluster-binding site is contributed by Cys-126. The Mg(2+) site is built by Asp-127 and Lys-128. At Lys-128 the chain carries N6-carboxylysine. Cys-203 lines the [2Fe-2S] cluster pocket. Glu-454 contributes to the Mg(2+) binding site. Ser-480 acts as the Proton acceptor in catalysis.

It belongs to the IlvD/Edd family. In terms of assembly, homodimer. [2Fe-2S] cluster serves as cofactor. Requires Mg(2+) as cofactor.

It catalyses the reaction (2R)-2,3-dihydroxy-3-methylbutanoate = 3-methyl-2-oxobutanoate + H2O. The catalysed reaction is (2R,3R)-2,3-dihydroxy-3-methylpentanoate = (S)-3-methyl-2-oxopentanoate + H2O. It participates in amino-acid biosynthesis; L-isoleucine biosynthesis; L-isoleucine from 2-oxobutanoate: step 3/4. It functions in the pathway amino-acid biosynthesis; L-valine biosynthesis; L-valine from pyruvate: step 3/4. In terms of biological role, functions in the biosynthesis of branched-chain amino acids. Catalyzes the dehydration of (2R,3R)-2,3-dihydroxy-3-methylpentanoate (2,3-dihydroxy-3-methylvalerate) into 2-oxo-3-methylpentanoate (2-oxo-3-methylvalerate) and of (2R)-2,3-dihydroxy-3-methylbutanoate (2,3-dihydroxyisovalerate) into 2-oxo-3-methylbutanoate (2-oxoisovalerate), the penultimate precursor to L-isoleucine and L-valine, respectively. The polypeptide is Dihydroxy-acid dehydratase (Mycobacterium leprae (strain TN)).